Consider the following 546-residue polypeptide: CTP synthase (546 aa).

Residues 1–267 are amidoligase domain; the sequence is MTKFIFVTGG…AEQVLDILQL (267 aa). Serine 13 lines the CTP pocket. UTP is bound at residue serine 13. An ATP-binding site is contributed by 14-19; that stretch reads SIGKGI. Residue tyrosine 54 participates in L-glutamine binding. Aspartate 71 is an ATP binding site. 2 residues coordinate Mg(2+): aspartate 71 and glutamate 141. Residues 148–150, 188–193, and lysine 224 each bind CTP; these read DIE and KTKPTQ. UTP is bound by residues 188 to 193 and lysine 224; that span reads KTKPTQ. Positions 292–534 constitute a Glutamine amidotransferase type-1 domain; that stretch reads EVAIVGKYVR…IKAALGSDLT (243 aa). Residue glycine 354 coordinates L-glutamine. Cysteine 381 functions as the Nucleophile; for glutamine hydrolysis in the catalytic mechanism. L-glutamine is bound by residues 382–385, glutamate 405, and arginine 462; that span reads LGMQ. Catalysis depends on residues histidine 507 and glutamate 509.

The protein belongs to the CTP synthase family. Homotetramer.

The enzyme catalyses UTP + L-glutamine + ATP + H2O = CTP + L-glutamate + ADP + phosphate + 2 H(+). It catalyses the reaction L-glutamine + H2O = L-glutamate + NH4(+). The catalysed reaction is UTP + NH4(+) + ATP = CTP + ADP + phosphate + 2 H(+). The protein operates within pyrimidine metabolism; CTP biosynthesis via de novo pathway; CTP from UDP: step 2/2. With respect to regulation, allosterically activated by GTP, when glutamine is the substrate; GTP has no effect on the reaction when ammonia is the substrate. The allosteric effector GTP functions by stabilizing the protein conformation that binds the tetrahedral intermediate(s) formed during glutamine hydrolysis. Inhibited by the product CTP, via allosteric rather than competitive inhibition. Its function is as follows. Catalyzes the ATP-dependent amination of UTP to CTP with either L-glutamine or ammonia as the source of nitrogen. Regulates intracellular CTP levels through interactions with the four ribonucleotide triphosphates. The chain is CTP synthase from Synechococcus sp. (strain ATCC 27144 / PCC 6301 / SAUG 1402/1) (Anacystis nidulans).